The following is a 593-amino-acid chain: Kelch-like protein 2 (593 aa).

Positions Met-1–Lys-28 are disordered. Positions Lys-17 to Lys-28 are enriched in basic and acidic residues. A BTB domain is found at Cys-56–Glu-123. Kelch repeat units follow at residues Leu-308–Gly-353, Leu-354–Gly-400, Leu-402–Gly-447, Leu-449–Asn-496, Leu-497–Gly-543, and Leu-545–Lys-591.

As to quaternary structure, component of the BCR(KLHL2) E3 ubiquitin ligase complex, at least composed of CUL3 and KLHL2 and RBX1. Binds actin. Interacts with KLHL12. Interacts (via N-terminus) with FYN (via SH3 domain). As to expression, ubiquitous. Detected throughout the brain.

The protein localises to the cytoplasm. The protein resides in the cytoskeleton. It is found in the cell projection. Its subcellular location is the ruffle. It localises to the lamellipodium. The protein localises to the cytosol. Its pathway is protein modification; protein ubiquitination. Substrate-specific adapter of a BCR (BTB-CUL3-RBX1) E3 ubiquitin ligase complex that mediates the ubiquitination of target proteins, such as NPTXR, WNK1, WNK3 and WNK4, leading most often to their proteasomal degradation. The BCR(KLHL2) complex catalyzes ubiquitination and degradation of NPTXR. Responsible for degradative ubiquitination of the WNK kinases WNK1, WNK3 and WNK4. Plays a role in the reorganization of the actin cytoskeleton. Promotes growth of cell projections in oligodendrocyte precursors. The polypeptide is Kelch-like protein 2 (Homo sapiens (Human)).